Here is a 463-residue protein sequence, read N- to C-terminus: Chromosomal replication initiator protein DnaA (463 aa).

Positions 1–84 (MNTNQIILTN…QLFQHYNNAI (84 aa)) are domain I, interacts with DnaA modulators. The interval 84-124 (IKTVEIITKELPASNQATLELPTKTFADIGSSELNSENIFS) is domain II. Residues 125 to 343 (TFDIRFTFDN…GALNKVIAHS (219 aa)) are domain III, AAA+ region. 4 residues coordinate ATP: glycine 171, glycine 173, lysine 174, and threonine 175. The tract at residues 344–463 (NFTAKEITLE…INLMMKILQN (120 aa)) is domain IV, binds dsDNA.

The protein belongs to the DnaA family. In terms of assembly, oligomerizes as a right-handed, spiral filament on DNA at oriC.

The protein resides in the cytoplasm. Plays an essential role in the initiation and regulation of chromosomal replication. ATP-DnaA binds to the origin of replication (oriC) to initiate formation of the DNA replication initiation complex once per cell cycle. Binds the DnaA box (a 9 base pair repeat at the origin) and separates the double-stranded (ds)DNA. Forms a right-handed helical filament on oriC DNA; dsDNA binds to the exterior of the filament while single-stranded (ss)DNA is stabiized in the filament's interior. The ATP-DnaA-oriC complex binds and stabilizes one strand of the AT-rich DNA unwinding element (DUE), permitting loading of DNA polymerase. After initiation quickly degrades to an ADP-DnaA complex that is not apt for DNA replication. Binds acidic phospholipids. This Rickettsia bellii (strain RML369-C) protein is Chromosomal replication initiator protein DnaA.